Reading from the N-terminus, the 286-residue chain is Cysteine-rich repeat secretory protein 57 (286 aa).

Residues 1–20 (METTKKLSVLLCLFFTMNQA) form the signal peptide. At 21–265 (ISESDSDEHM…PSRSGSFSIR (245 aa)) the chain is on the extracellular side. Gnk2-homologous domains lie at 29 to 131 (HMAT…DKFF) and 137 to 247 (TKPN…TSNS). N-linked (GlcNAc...) asparagine glycans are attached at residues Asn-35, Asn-40, Asn-44, Asn-60, Asn-69, Asn-90, Asn-100, Asn-108, Asn-209, and Asn-246. A helical membrane pass occupies residues 266 to 284 (GNNKILVGMILAVSVFAFL). The Cytoplasmic segment spans residues 285–286 (GL).

Belongs to the cysteine-rich repeat secretory protein family.

Its subcellular location is the membrane. The polypeptide is Cysteine-rich repeat secretory protein 57 (CRRSP57) (Arabidopsis thaliana (Mouse-ear cress)).